We begin with the raw amino-acid sequence, 432 residues long: Glutamate-1-semialdehyde 2,1-aminomutase 2 (432 aa).

An N6-(pyridoxal phosphate)lysine modification is found at lysine 268.

The protein belongs to the class-III pyridoxal-phosphate-dependent aminotransferase family. HemL subfamily. In terms of assembly, homodimer. It depends on pyridoxal 5'-phosphate as a cofactor.

The protein localises to the cytoplasm. It carries out the reaction (S)-4-amino-5-oxopentanoate = 5-aminolevulinate. Its pathway is porphyrin-containing compound metabolism; protoporphyrin-IX biosynthesis; 5-aminolevulinate from L-glutamyl-tRNA(Glu): step 2/2. This chain is Glutamate-1-semialdehyde 2,1-aminomutase 2, found in Listeria monocytogenes serotype 4b (strain CLIP80459).